A 154-amino-acid polypeptide reads, in one-letter code: Endoribonuclease YbeY (154 aa).

Zn(2+) contacts are provided by His117, His121, and His127.

This sequence belongs to the endoribonuclease YbeY family. Zn(2+) serves as cofactor.

The protein resides in the cytoplasm. Functionally, single strand-specific metallo-endoribonuclease involved in late-stage 70S ribosome quality control and in maturation of the 3' terminus of the 16S rRNA. The chain is Endoribonuclease YbeY from Mycoplasma pneumoniae (strain ATCC 29342 / M129 / Subtype 1) (Mycoplasmoides pneumoniae).